The primary structure comprises 378 residues: Erythronate-4-phosphate dehydrogenase (378 aa).

2 residues coordinate substrate: serine 45 and threonine 66. Positions 146 and 175 each coordinate NAD(+). The active site involves arginine 208. Aspartate 232 lines the NAD(+) pocket. Residue glutamate 237 is part of the active site. The active-site Proton donor is the histidine 254. Residue glycine 257 participates in NAD(+) binding. Tyrosine 258 provides a ligand contact to substrate.

The protein belongs to the D-isomer specific 2-hydroxyacid dehydrogenase family. PdxB subfamily. As to quaternary structure, homodimer.

It is found in the cytoplasm. The enzyme catalyses 4-phospho-D-erythronate + NAD(+) = (R)-3-hydroxy-2-oxo-4-phosphooxybutanoate + NADH + H(+). It participates in cofactor biosynthesis; pyridoxine 5'-phosphate biosynthesis; pyridoxine 5'-phosphate from D-erythrose 4-phosphate: step 2/5. Functionally, catalyzes the oxidation of erythronate-4-phosphate to 3-hydroxy-2-oxo-4-phosphonooxybutanoate. This is Erythronate-4-phosphate dehydrogenase from Escherichia coli (strain 55989 / EAEC).